A 549-amino-acid chain; its full sequence is Hydroxylamine reductase (549 aa).

The [4Fe-4S] cluster site is built by cysteine 5, cysteine 8, cysteine 17, and cysteine 23. Residues histidine 242, glutamate 266, cysteine 310, cysteine 402, cysteine 430, cysteine 455, glutamate 490, and lysine 492 each contribute to the hybrid [4Fe-2O-2S] cluster site. At cysteine 402 the chain carries Cysteine persulfide.

The protein belongs to the HCP family. [4Fe-4S] cluster serves as cofactor. Requires hybrid [4Fe-2O-2S] cluster as cofactor.

The protein localises to the cytoplasm. The catalysed reaction is A + NH4(+) + H2O = hydroxylamine + AH2 + H(+). Functionally, catalyzes the reduction of hydroxylamine to form NH(3) and H(2)O. The protein is Hydroxylamine reductase of Clostridium novyi (strain NT).